The chain runs to 488 residues: Glutamyl-tRNA(Gln) amidotransferase subunit A (488 aa).

Residues Lys77 and Ser152 each act as charge relay system in the active site. Ser176 functions as the Acyl-ester intermediate in the catalytic mechanism.

It belongs to the amidase family. GatA subfamily. Heterotrimer of A, B and C subunits.

The catalysed reaction is L-glutamyl-tRNA(Gln) + L-glutamine + ATP + H2O = L-glutaminyl-tRNA(Gln) + L-glutamate + ADP + phosphate + H(+). Allows the formation of correctly charged Gln-tRNA(Gln) through the transamidation of misacylated Glu-tRNA(Gln) in organisms which lack glutaminyl-tRNA synthetase. The reaction takes place in the presence of glutamine and ATP through an activated gamma-phospho-Glu-tRNA(Gln). The polypeptide is Glutamyl-tRNA(Gln) amidotransferase subunit A (Streptococcus equi subsp. zooepidemicus (strain H70)).